The following is a 504-amino-acid chain: Lysine--tRNA ligase (504 aa).

Mg(2+) is bound by residues glutamate 414 and glutamate 421.

The protein belongs to the class-II aminoacyl-tRNA synthetase family. In terms of assembly, homodimer. It depends on Mg(2+) as a cofactor.

The protein resides in the cytoplasm. The enzyme catalyses tRNA(Lys) + L-lysine + ATP = L-lysyl-tRNA(Lys) + AMP + diphosphate. The protein is Lysine--tRNA ligase of Photorhabdus laumondii subsp. laumondii (strain DSM 15139 / CIP 105565 / TT01) (Photorhabdus luminescens subsp. laumondii).